The chain runs to 265 residues: Acetylglutamate kinase (265 aa).

Substrate-binding positions include 41–42 (GG), R63, and N156.

The protein belongs to the acetylglutamate kinase family. ArgB subfamily.

The protein resides in the cytoplasm. The catalysed reaction is N-acetyl-L-glutamate + ATP = N-acetyl-L-glutamyl 5-phosphate + ADP. The protein operates within amino-acid biosynthesis; L-arginine biosynthesis; N(2)-acetyl-L-ornithine from L-glutamate: step 2/4. Catalyzes the ATP-dependent phosphorylation of N-acetyl-L-glutamate. The protein is Acetylglutamate kinase of Oceanobacillus iheyensis (strain DSM 14371 / CIP 107618 / JCM 11309 / KCTC 3954 / HTE831).